We begin with the raw amino-acid sequence, 946 residues long: Leucine--tRNA ligase (946 aa).

The short motif at 40 to 51 is the 'HIGH' region element; it reads PYPSGAGLHVGH. A 'KMSKS' region motif is present at residues 719–723; it reads KMSKS. Residue lysine 722 coordinates ATP.

This sequence belongs to the class-I aminoacyl-tRNA synthetase family.

The protein localises to the cytoplasm. The catalysed reaction is tRNA(Leu) + L-leucine + ATP = L-leucyl-tRNA(Leu) + AMP + diphosphate. The sequence is that of Leucine--tRNA ligase from Parabacteroides distasonis (strain ATCC 8503 / DSM 20701 / CIP 104284 / JCM 5825 / NCTC 11152).